The primary structure comprises 435 residues: Putative F-box/kelch-repeat protein At1g13200 (435 aa).

Positions 1–29 (MKDAEKREVIASSSLQRKRNRGRRLRKRR) are disordered. Basic residues predominate over residues 16-29 (QRKRNRGRRLRKRR). One can recognise an F-box domain in the interval 37–82 (LMVPSSLPNDVLEEIFLRFPVKALIRLKSLSKQWRSTIESRSFEER). Kelch repeat units follow at residues 164–217 (SVYV…DYKL), 224–270 (DKYI…PASA), 273–317 (SVYW…HIDM), and 322–368 (NSLC…EKRD).

This Arabidopsis thaliana (Mouse-ear cress) protein is Putative F-box/kelch-repeat protein At1g13200.